We begin with the raw amino-acid sequence, 4011 residues long: Hybrid PKS-NRPS synthetase mycA (4011 aa).

A Ketosynthase family 3 (KS3) domain is found at 12-451 (NEPIAIIGSA…GANAHVILEN (440 aa)). Active-site for beta-ketoacyl synthase activity residues include cysteine 185, histidine 324, and histidine 373. The tract at residues 576–903 (VFTGQGAQWA…PYTGTLSRGS (328 aa)) is acyl transferase (AT) domain. Positions 977 to 1113 (NPLLGRRIPD…GRVIVTLAGT (137 aa)) are N-terminal hotdog fold. Residues 977-1290 (NPLLGRRIPD…ITPLATRTGQ (314 aa)) form the PKS/mFAS DH domain. Positions 978 to 1287 (PLLGRRIPDG…GVRITPLATR (310 aa)) are dehydratase (DH) domain. Histidine 1009 serves as the catalytic Proton acceptor; for dehydratase activity. Residues 1135–1290 (TAEVREDEFY…ITPLATRTGQ (156 aa)) form a C-terminal hotdog fold region. The active-site Proton donor; for dehydratase activity is the aspartate 1195. The tract at residues 1434 to 1626 (YYVEALGIRE…FSGIDTITPE (193 aa)) is methyltransferase (MT) domain. Residues 2138-2311 (TYVLFGLTSD…AASVLHLGAV (174 aa)) form a ketoreductase (KR)domain region. Residues 2429-2504 (DSFLQKLQIM…DLVAFAHEKL (76 aa)) enclose the Carrier 1 domain. Serine 2464 carries the O-(pantetheine 4'-phosphoryl)serine modification. Positions 2519 to 2607 (AAAAAAAERS…PREQDVERTA (89 aa)) are disordered. A compositionally biased stretch (polar residues) spans 2559–2578 (PASSSTGSDHPTSVTSSGHT). The interval 2604–2975 (ERTAPMSLGQ…KPDSTLGSAP (372 aa)) is condensation. Residues 3009–3414 (IIQRNPDTIA…GELEILGRID (406 aa)) form an adenylation region. The segment at 3525-3544 (AKEEEEEKRPNGSSAAPLTQ) is disordered. Over residues 3535 to 3544 (NGSSAAPLTQ) the composition is skewed to polar residues. The 81-residue stretch at 3541–3621 (PLTQQELQLR…AMAAAVHDAA (81 aa)) folds into the Carrier 2 domain. Serine 3581 is subject to O-(pantetheine 4'-phosphoryl)serine. The reductase-like stretch occupies residues 3671–3978 (VVILTGATGF…RTVPLGQWIE (308 aa)).

The protein in the C-terminal section; belongs to the NRP synthetase family.

The enzyme catalyses L-leucine + 8 malonyl-CoA + 4 S-adenosyl-L-methionine + ATP + 9 NADPH + 12 H(+) = (5S)-5-(2-methylpropyl)-3-[(2E,6R,8E,10E,12E)-6,8,10,12-tetramethyltetradeca-2,8,10,12-tetraenoyl]-2,5-dihydro-1H-pyrrol-2-one + AMP + 4 S-adenosyl-L-homocysteine + 8 CO2 + diphosphate + 9 NADP(+) + 8 CoA + 7 H2O. The protein operates within mycotoxin biosynthesis. In terms of biological role, hybrid PKS-NRPS synthetase; part of the gene cluster that mediates the biosynthesis of myceliothermophins, mycotoxins that contain a trans-fused decalin ring system connected to a conjugated 3-pyrrolin-2-one moiety and that have potential anti-tumor properties. The polyketide synthase module (PKS) of the PKS-NRPS mycA is responsible for the synthesis of the octaketide backbone. The downstream nonribosomal peptide synthetase (NRPS) module then amidates the carboxyl end of the octaketide with a leucine. A reductase-like domain (R) at the C-terminus catalyzes the reductive release of the polyketide-amino acid intermediate. Because mycA lacks a designated enoylreductase (ER) domain, the required activity is provided the enoyl reductase mycC. Following mycA-catalyzed construction and release of aminoacyl polyketide aldehyde, Knoevenagel condensation yields the expected ketone. This C18 keto acyclic precursor is the substrate of the Diels-Alderase mycB, that catalyzes the Diels-Alder cycloaddition to produce myceliothermophin E. A yet unknown oxygenase involved in the production of myceliothermophin A, via substitution with a hydroxyl group at the C21, has still to be identified. The polypeptide is Hybrid PKS-NRPS synthetase mycA (Thermothelomyces thermophilus (strain ATCC 42464 / BCRC 31852 / DSM 1799) (Sporotrichum thermophile)).